Consider the following 67-residue polypeptide: Conotoxin ArMLCL-012 (67 aa).

The first 19 residues, 1–19 (MLCLPVFIILLLLASPAAS), serve as a signal peptide directing secretion. Residues 20–45 (NPLEKRIQSDLIRAALEDADTKNDPR) constitute a propeptide that is removed on maturation. At Cys64 the chain carries Cysteine amide.

Belongs to the conotoxin T superfamily. Contains 2 disulfide bonds that can be either 'C1-C3, C2-C4' or 'C1-C4, C2-C3', since these disulfide connectivities have been observed for conotoxins with cysteine framework V (for examples, see AC P0DQQ7 and AC P81755). Expressed by the venom duct.

The protein resides in the secreted. The polypeptide is Conotoxin ArMLCL-012 (Conus arenatus (Sand-dusted cone)).